Here is a 102-residue protein sequence, read N- to C-terminus: Cuticle protein AM/CP1114 (102 aa).

Residues 16–81 (DGNFHYSFET…VESPLLPSIP (66 aa)) enclose the Chitin-binding type R&amp;R domain. Polar residues predominate over residues 23 to 33 (FETSNGIQDTK). The segment at 23–50 (FETSNGIQDTKTGVPGSAGQSNMNGDFS) is disordered.

As to expression, arthrodial membrane and calcified shell.

The polypeptide is Cuticle protein AM/CP1114 (Cancer pagurus (Rock crab)).